Reading from the N-terminus, the 143-residue chain is UPF0201 protein Pars_1985 (143 aa).

The protein belongs to the UPF0201 family.

The protein is UPF0201 protein Pars_1985 of Pyrobaculum arsenaticum (strain DSM 13514 / JCM 11321 / PZ6).